Consider the following 167-residue polypeptide: Mediator of RNA polymerase II transcription subunit 10 (167 aa).

The tract at residues 54 to 92 (STHTKPHPPPPPPPQPTDPTTAAAPALRDNPDPPLSSIQ) is disordered. Positions 60-70 (HPPPPPPPQPT) are enriched in pro residues.

The protein belongs to the Mediator complex subunit 10 family. As to quaternary structure, component of the Mediator complex.

The protein resides in the nucleus. Its function is as follows. Component of the Mediator complex, a coactivator involved in the regulated transcription of nearly all RNA polymerase II-dependent genes. Mediator functions as a bridge to convey information from gene-specific regulatory proteins to the basal RNA polymerase II transcription machinery. Mediator is recruited to promoters by direct interactions with regulatory proteins and serves as a scaffold for the assembly of a functional preinitiation complex with RNA polymerase II and the general transcription factors. The chain is Mediator of RNA polymerase II transcription subunit 10 (nut2) from Aspergillus clavatus (strain ATCC 1007 / CBS 513.65 / DSM 816 / NCTC 3887 / NRRL 1 / QM 1276 / 107).